Here is a 162-residue protein sequence, read N- to C-terminus: 3-hydroxyacyl-[acyl-carrier-protein] dehydratase FabZ (162 aa).

The active site involves histidine 49.

Belongs to the thioester dehydratase family. FabZ subfamily.

The protein resides in the cytoplasm. It carries out the reaction a (3R)-hydroxyacyl-[ACP] = a (2E)-enoyl-[ACP] + H2O. In terms of biological role, involved in unsaturated fatty acids biosynthesis. Catalyzes the dehydration of short chain beta-hydroxyacyl-ACPs and long chain saturated and unsaturated beta-hydroxyacyl-ACPs. In Solibacter usitatus (strain Ellin6076), this protein is 3-hydroxyacyl-[acyl-carrier-protein] dehydratase FabZ.